A 175-amino-acid polypeptide reads, in one-letter code: Ribosome maturation factor RimM (175 aa).

The PRC barrel domain occupies 94 to 166; that stretch reads SDSWYEHELI…FIRLVPPGGL (73 aa).

Belongs to the RimM family. In terms of assembly, binds ribosomal protein uS19.

Its subcellular location is the cytoplasm. In terms of biological role, an accessory protein needed during the final step in the assembly of 30S ribosomal subunit, possibly for assembly of the head region. Essential for efficient processing of 16S rRNA. May be needed both before and after RbfA during the maturation of 16S rRNA. It has affinity for free ribosomal 30S subunits but not for 70S ribosomes. The sequence is that of Ribosome maturation factor RimM from Renibacterium salmoninarum (strain ATCC 33209 / DSM 20767 / JCM 11484 / NBRC 15589 / NCIMB 2235).